A 391-amino-acid polypeptide reads, in one-letter code: MAPAMDSAQNGHQSRGSANVLAIGTANPPNVILQEDYPDFYFKVTNSEHLTDLKEKFKRICVKSKTRKRHFYLTEQILKENPGIATYGAGSLDSRQKILETEIPKLGKEAAMVAIQEWGQPVSKITHVVFATTSGFMMPGADYSITRLLGLNPNVRRVMIYNQGCFAGGTALRVAKDLAENNKGARVLVVCAENTAMTFHGPNENHLDVLVGQAMFSDGAAALIIGANPNLPEERPVYEMVAAHQTIVPESDGAIVAHFYEMGMSYFLKENVIPLFGNNIEACMEAAFKEYGISDWNSLFYSVHPGGRAIVDGIAEKLGLDEENLKATRHVLSEYGNMGSACVIFILDELRKKSKEEKKLTTGDGKEWGCLIGLGPGLTVETVVLRSVPIA.

The active site involves cysteine 165.

This sequence belongs to the thiolase-like superfamily. Chalcone/stilbene synthases family. As to quaternary structure, homodimer. In terms of tissue distribution, expressed in young fruit pericarp.

The catalysed reaction is benzoyl-CoA + 3 malonyl-CoA + 2 H(+) = 2,4,6-trihydroxybenzophenone + 3 CO2 + 4 CoA. Its function is as follows. Type III polyketide synthase involved in the biosynthesis of benzophenones and xanthones. Produces mainly 2,4,6-trihydroxybenzophenone together with minor amounts of tetraketide lactone, triketide lactone and diketide lactone. The preferred substrate is benzoyl-CoA, but can also use acetyl-CoA, phenylacetyl-CoA, hexanoyl-CoA, cinnamoyl-CoA, p-coumaroyl-CoA and salicoyl-CoA. This Garcinia mangostana (Mangosteen) protein is 2,4,6-trihydroxybenzophenone synthase (BPS).